Reading from the N-terminus, the 131-residue chain is Sec-independent protein translocase protein TatB (131 aa).

A helical transmembrane segment spans residues 2–22 (LGSLSWEHMLVLVVVGLVVLG). Positions 96-131 (AFDRPVNGAAAQPPPAPAPPPEPHRSGQTPFDADAT) are disordered. Positions 107–116 (QPPPAPAPPP) are enriched in pro residues.

Belongs to the TatB family. As to quaternary structure, the Tat system comprises two distinct complexes: a TatABC complex, containing multiple copies of TatA, TatB and TatC subunits, and a separate TatA complex, containing only TatA subunits. Substrates initially bind to the TatABC complex, which probably triggers association of the separate TatA complex to form the active translocon.

It is found in the cell membrane. In terms of biological role, part of the twin-arginine translocation (Tat) system that transports large folded proteins containing a characteristic twin-arginine motif in their signal peptide across membranes. Together with TatC, TatB is part of a receptor directly interacting with Tat signal peptides. TatB may form an oligomeric binding site that transiently accommodates folded Tat precursor proteins before their translocation. The protein is Sec-independent protein translocase protein TatB of Mycolicibacterium paratuberculosis (strain ATCC BAA-968 / K-10) (Mycobacterium paratuberculosis).